A 382-amino-acid polypeptide reads, in one-letter code: Carbamoyl phosphate synthase small chain (382 aa).

The segment at 1–189 (MIKSALLVLE…GLPEAKSEDD (189 aa)) is CPSase. Residues Ser-47, Gly-241, and Gly-243 each coordinate L-glutamine. The Glutamine amidotransferase type-1 domain maps to 193-380 (HVVAYDFGAK…IELIEQYRQS (188 aa)). Catalysis depends on Cys-269, which acts as the Nucleophile. Positions 270, 273, 311, 313, and 314 each coordinate L-glutamine. Catalysis depends on residues His-353 and Glu-355.

The protein belongs to the CarA family. As to quaternary structure, composed of two chains; the small (or glutamine) chain promotes the hydrolysis of glutamine to ammonia, which is used by the large (or ammonia) chain to synthesize carbamoyl phosphate. Tetramer of heterodimers (alpha,beta)4.

The enzyme catalyses hydrogencarbonate + L-glutamine + 2 ATP + H2O = carbamoyl phosphate + L-glutamate + 2 ADP + phosphate + 2 H(+). The catalysed reaction is L-glutamine + H2O = L-glutamate + NH4(+). It functions in the pathway amino-acid biosynthesis; L-arginine biosynthesis; carbamoyl phosphate from bicarbonate: step 1/1. The protein operates within pyrimidine metabolism; UMP biosynthesis via de novo pathway; (S)-dihydroorotate from bicarbonate: step 1/3. Functionally, small subunit of the glutamine-dependent carbamoyl phosphate synthetase (CPSase). CPSase catalyzes the formation of carbamoyl phosphate from the ammonia moiety of glutamine, carbonate, and phosphate donated by ATP, constituting the first step of 2 biosynthetic pathways, one leading to arginine and/or urea and the other to pyrimidine nucleotides. The small subunit (glutamine amidotransferase) binds and cleaves glutamine to supply the large subunit with the substrate ammonia. This is Carbamoyl phosphate synthase small chain from Salmonella typhimurium (strain LT2 / SGSC1412 / ATCC 700720).